A 394-amino-acid chain; its full sequence is Elongation factor Tu (394 aa).

In terms of domain architecture, tr-type G spans 10–204; that stretch reads KPHVNVGTIG…ALDNYIPEPE (195 aa). The G1 stretch occupies residues 19 to 26; the sequence is GHVDHGKT. GTP is bound at residue 19 to 26; that stretch reads GHVDHGKT. Threonine 26 is a binding site for Mg(2+). The segment at 60–64 is G2; sequence GITIS. Residues 81–84 form a G3 region; that stretch reads DCPG. GTP contacts are provided by residues 81-85 and 136-139; these read DCPGH and NKCD. The tract at residues 136 to 139 is G4; the sequence is NKCD. Positions 174-176 are G5; that stretch reads SAL.

This sequence belongs to the TRAFAC class translation factor GTPase superfamily. Classic translation factor GTPase family. EF-Tu/EF-1A subfamily. As to quaternary structure, monomer.

The protein resides in the cytoplasm. The enzyme catalyses GTP + H2O = GDP + phosphate + H(+). Its function is as follows. GTP hydrolase that promotes the GTP-dependent binding of aminoacyl-tRNA to the A-site of ribosomes during protein biosynthesis. This Idiomarina loihiensis (strain ATCC BAA-735 / DSM 15497 / L2-TR) protein is Elongation factor Tu.